A 369-amino-acid polypeptide reads, in one-letter code: Erythronate-4-phosphate dehydrogenase (369 aa).

Residues Ser-45 and Thr-66 each contribute to the substrate site. Asp-146 is an NAD(+) binding site. Residue Arg-209 is part of the active site. Position 233 (Asp-233) interacts with NAD(+). The active site involves Glu-238. Residue His-255 is the Proton donor of the active site. Gly-258 lines the NAD(+) pocket.

The protein belongs to the D-isomer specific 2-hydroxyacid dehydrogenase family. PdxB subfamily. As to quaternary structure, homodimer.

Its subcellular location is the cytoplasm. The catalysed reaction is 4-phospho-D-erythronate + NAD(+) = (R)-3-hydroxy-2-oxo-4-phosphooxybutanoate + NADH + H(+). It participates in cofactor biosynthesis; pyridoxine 5'-phosphate biosynthesis; pyridoxine 5'-phosphate from D-erythrose 4-phosphate: step 2/5. Catalyzes the oxidation of erythronate-4-phosphate to 3-hydroxy-2-oxo-4-phosphonooxybutanoate. This Porphyromonas gingivalis (strain ATCC BAA-308 / W83) protein is Erythronate-4-phosphate dehydrogenase.